The sequence spans 589 residues: Pentalenolactone D synthase (589 aa).

Residues 60–61 (IG), 82–83 (DE), 90–91 (TW), 102–103 (DV), Tyr-108, Val-152, and Met-491 contribute to the FAD site.

It belongs to the FAD-binding monooxygenase family. FAD is required as a cofactor.

It carries out the reaction 1-deoxy-11-oxopentalenate + NADPH + O2 + H(+) = pentalenolactone D + NADP(+) + H2O. The protein operates within antibiotic biosynthesis; pentalenolactone biosynthesis. In terms of biological role, catalyzes the flavin-dependent Baeyer-Villiger oxidation of 1-deoxy-11-oxopentalenic acid to pentalenolactone D in the biosynthesis of pentalenolactone antibiotic. The polypeptide is Pentalenolactone D synthase (pntE) (Streptomyces arenae).